We begin with the raw amino-acid sequence, 211 residues long: LexA repressor (211 aa).

A DNA-binding region (H-T-H motif) is located at residues 27–47 (QTEIARAFGFKGVRAVQHHLD). Residues serine 131 and lysine 168 each act as for autocatalytic cleavage activity in the active site.

This sequence belongs to the peptidase S24 family. Homodimer.

It catalyses the reaction Hydrolysis of Ala-|-Gly bond in repressor LexA.. Its function is as follows. Represses a number of genes involved in the response to DNA damage (SOS response), including recA and lexA. In the presence of single-stranded DNA, RecA interacts with LexA causing an autocatalytic cleavage which disrupts the DNA-binding part of LexA, leading to derepression of the SOS regulon and eventually DNA repair. The polypeptide is LexA repressor (Xylella fastidiosa (strain 9a5c)).